Here is a 530-residue protein sequence, read N- to C-terminus: N-acetylmuramoyl-L-alanine amidase (530 aa).

An N-terminal signal peptide occupies residues 1-22; it reads MKAWGALWIVLGLLLWPEPGAA. Residues Asn61, Asn80, and Asn174 are each glycosylated (N-linked (GlcNAc...) asparagine). Position 219 is a phosphoserine (Ser219). An N-linked (GlcNAc...) asparagine glycan is attached at Asn335. The region spanning 386–512 is the N-acetylmuramoyl-L-alanine amidase domain; the sequence is FLYVHHTYVP…RQLVLTHCPG (127 aa). Position 390 (His390) interacts with Zn(2+). An intrachain disulfide couples Cys399 to Cys405. The N-linked (GlcNAc...) asparagine glycan is linked to Asn465. The Zn(2+) site is built by His502 and Cys510.

Belongs to the N-acetylmuramoyl-L-alanine amidase 2 family. Zn(2+) serves as cofactor. As to expression, strongly expressed in liver and fetal liver.

The protein resides in the secreted. Its subcellular location is the membrane. The enzyme catalyses Hydrolyzes the link between N-acetylmuramoyl residues and L-amino acid residues in certain cell-wall glycopeptides.. May play a scavenger role by digesting biologically active peptidoglycan (PGN) into biologically inactive fragments. Has no direct bacteriolytic activity. The protein is N-acetylmuramoyl-L-alanine amidase (Pglyrp2) of Mus musculus (Mouse).